A 150-amino-acid polypeptide reads, in one-letter code: Transcriptional repressor NrdR (150 aa).

The segment at 3–34 (CPYCQFEDTRVIDSRLASEGEQVRRRRECNRC) is a zinc-finger region. An ATP-cone domain is found at 49-139 (PRIVKRDGTR…VYRSFEDVSA (91 aa)).

This sequence belongs to the NrdR family. The cofactor is Zn(2+).

Its function is as follows. Negatively regulates transcription of bacterial ribonucleotide reductase nrd genes and operons by binding to NrdR-boxes. The sequence is that of Transcriptional repressor NrdR from Alkalilimnicola ehrlichii (strain ATCC BAA-1101 / DSM 17681 / MLHE-1).